Reading from the N-terminus, the 66-residue chain is Beta-toxin Ct71 (66 aa).

An LCN-type CS-alpha/beta domain is found at 1–66 (KEGYIVNYHD…VWPLPKKTCN (66 aa)). Cystine bridges form between cysteine 12/cysteine 65, cysteine 16/cysteine 41, cysteine 25/cysteine 46, and cysteine 29/cysteine 48. Residue asparagine 66 is modified to Asparagine amide.

The protein belongs to the long (4 C-C) scorpion toxin superfamily. Sodium channel inhibitor family. Beta subfamily. Expressed by the venom gland.

It is found in the secreted. Beta toxins bind voltage-independently at site-4 of sodium channels (Nav) and shift the voltage of activation toward more negative potentials thereby affecting sodium channel activation and promoting spontaneous and repetitive firing. Lethal to mice. The polypeptide is Beta-toxin Ct71 (Centruroides tecomanus (Scorpion)).